A 217-amino-acid polypeptide reads, in one-letter code: Ribosomal RNA large subunit methyltransferase E (217 aa).

G71, W73, D91, D107, and D132 together coordinate S-adenosyl-L-methionine. The Proton acceptor role is filled by K172.

This sequence belongs to the class I-like SAM-binding methyltransferase superfamily. RNA methyltransferase RlmE family.

Its subcellular location is the cytoplasm. The enzyme catalyses uridine(2552) in 23S rRNA + S-adenosyl-L-methionine = 2'-O-methyluridine(2552) in 23S rRNA + S-adenosyl-L-homocysteine + H(+). Functionally, specifically methylates the uridine in position 2552 of 23S rRNA at the 2'-O position of the ribose in the fully assembled 50S ribosomal subunit. The protein is Ribosomal RNA large subunit methyltransferase E of Psychromonas ingrahamii (strain DSM 17664 / CCUG 51855 / 37).